The following is a 389-amino-acid chain: MKTGHFEIVTMLLATMILVDIFQVKAEVLDMADNAFDDEYLKCTDRMEIKYVPQLLKEEKASHQQLDTVWENAKAKWAARKTQIFLPMNFKDNHGIALMAYISEAQEQTPFYHLFSEAVKMAGQSREDYIYGFQFKAFHFYLTRALQLLRKPCEASSKTVVYRTSQGTSFTFGGLNQARFGHFTLAYSAKPQAANDQLTVLSIYTCLGVDIENFLDKESERITLIPLNEVFQVSQEGAGNNLILQSINKTCSHYECAFLGGLKTENCIENLEYFQPIYVYNPGEKNQKLEDHSEKNWKLEDHGEKNQKLEDHGVKILEPTQIPGMKIPEPFPLPEDKSQGNINNPTPGPVPVPGPKSHPSASSGKLLLPQFGMVIILISVSAINLFVAL.

The N-terminal stretch at 1–26 is a signal peptide; that stretch reads MKTGHFEIVTMLLATMILVDIFQVKA. C43 and C256 are oxidised to a cystine. In terms of domain architecture, TR mART core spans 64-251; that stretch reads QQLDTVWENA…LILQSINKTC (188 aa). Residues Y101 and R163 each coordinate NAD(+). An N-linked (GlcNAc...) asparagine glycan is attached at N248. 3 repeat units span residues 283–292, 293–302, and 303–312. Positions 283-312 are 3 X 10 AA tandem repeats of [GS]-E-K-N-[QW]-K-L-E-D-H; the sequence is GEKNQKLEDHSEKNWKLEDHGEKNQKLEDH. Residues 325–362 form a disordered region; sequence MKIPEPFPLPEDKSQGNINNPTPGPVPVPGPKSHPSAS. T346 is a glycosylation site (O-linked (GalNAc...) threonine). The segment covering 346 to 356 has biased composition (pro residues); that stretch reads TPGPVPVPGPK. S362 carries GPI-anchor amidated serine lipidation. Positions 363–389 are cleaved as a propeptide — removed in mature form; it reads SGKLLLPQFGMVIILISVSAINLFVAL.

The protein belongs to the Arg-specific ADP-ribosyltransferase family. In terms of processing, O-glycosylated with core 1 or possibly core 8 glycans. As to expression, testis specific.

It is found in the cell membrane. It catalyses the reaction L-arginyl-[protein] + NAD(+) = N(omega)-(ADP-D-ribosyl)-L-arginyl-[protein] + nicotinamide + H(+). The chain is Ecto-ADP-ribosyltransferase 3 (ART3) from Homo sapiens (Human).